Consider the following 305-residue polypeptide: UDP-3-O-acyl-N-acetylglucosamine deacetylase (305 aa).

Zn(2+) is bound by residues H78, H237, and D241. The active-site Proton donor is the H264.

It belongs to the LpxC family. Zn(2+) is required as a cofactor.

The enzyme catalyses a UDP-3-O-[(3R)-3-hydroxyacyl]-N-acetyl-alpha-D-glucosamine + H2O = a UDP-3-O-[(3R)-3-hydroxyacyl]-alpha-D-glucosamine + acetate. It functions in the pathway glycolipid biosynthesis; lipid IV(A) biosynthesis; lipid IV(A) from (3R)-3-hydroxytetradecanoyl-[acyl-carrier-protein] and UDP-N-acetyl-alpha-D-glucosamine: step 2/6. In terms of biological role, catalyzes the hydrolysis of UDP-3-O-myristoyl-N-acetylglucosamine to form UDP-3-O-myristoylglucosamine and acetate, the committed step in lipid A biosynthesis. In Paraburkholderia phytofirmans (strain DSM 17436 / LMG 22146 / PsJN) (Burkholderia phytofirmans), this protein is UDP-3-O-acyl-N-acetylglucosamine deacetylase.